The chain runs to 559 residues: Nucleolar protein 12 (559 aa).

The tract at residues 24-194 (ASSAGPVQAP…AGNESDIPVH (171 aa)) is disordered. Over residues 44–56 (QKVREPAKPKVHL) the composition is skewed to basic and acidic residues. Residues 57–110 (EEDDEVLSEISEELSFEEDGPSDEDEDEDEDEENSEQEDGSGDEQEEEESEDVD) show a composition bias toward acidic residues. Basic and acidic residues predominate over residues 141–180 (NDNDDLEGKYLDKVAAEEEADRAGKRQKNDALTKTEKPAV). RRM domains are found at residues 211–320 (RTVF…SVAH) and 328–432 (RCVF…RAKD). The interval 429–559 (RAKDPRKTAL…RASEWKKKKN (131 aa)) is disordered. 2 stretches are compositionally biased toward basic and acidic residues: residues 516–532 (EGRR…DLKQ) and 550–559 (RASEWKKKKN).

This sequence belongs to the RRM RBM34 family.

It localises to the nucleus. The protein localises to the nucleolus. Its function is as follows. Involved in pre-25S rRNA processing. This chain is Nucleolar protein 12 (NOP12), found in Gibberella zeae (strain ATCC MYA-4620 / CBS 123657 / FGSC 9075 / NRRL 31084 / PH-1) (Wheat head blight fungus).